We begin with the raw amino-acid sequence, 62 residues long: Translational regulator CsrA (62 aa).

Belongs to the CsrA/RsmA family. Homodimer; the beta-strands of each monomer intercalate to form a hydrophobic core, while the alpha-helices form wings that extend away from the core.

It is found in the cytoplasm. A key translational regulator that binds mRNA to regulate translation initiation and/or mRNA stability. Mediates global changes in gene expression, shifting from rapid growth to stress survival by linking envelope stress, the stringent response and the catabolite repression systems. Usually binds in the 5'-UTR; binding at or near the Shine-Dalgarno sequence prevents ribosome-binding, repressing translation, binding elsewhere in the 5'-UTR can activate translation and/or stabilize the mRNA. Its function is antagonized by small RNA(s). This chain is Translational regulator CsrA, found in Pasteurella multocida (strain Pm70).